The following is a 226-amino-acid chain: Ribose-5-phosphate isomerase A (226 aa).

Residues 26 to 29 (TGST), 82 to 85 (DGAD), and 95 to 98 (KGGG) contribute to the substrate site. Residue glutamate 104 is the Proton acceptor of the active site. Lysine 122 serves as a coordination point for substrate.

This sequence belongs to the ribose 5-phosphate isomerase family. Homodimer.

It catalyses the reaction aldehydo-D-ribose 5-phosphate = D-ribulose 5-phosphate. The protein operates within carbohydrate degradation; pentose phosphate pathway; D-ribose 5-phosphate from D-ribulose 5-phosphate (non-oxidative stage): step 1/1. Functionally, catalyzes the reversible conversion of ribose-5-phosphate to ribulose 5-phosphate. The protein is Ribose-5-phosphate isomerase A of Streptococcus thermophilus (strain CNRZ 1066).